The sequence spans 554 residues: Formate--tetrahydrofolate ligase (554 aa).

ATP is bound at residue 64–71; that stretch reads TPAGEGKS.

The protein belongs to the formate--tetrahydrofolate ligase family.

The enzyme catalyses (6S)-5,6,7,8-tetrahydrofolate + formate + ATP = (6R)-10-formyltetrahydrofolate + ADP + phosphate. The protein operates within one-carbon metabolism; tetrahydrofolate interconversion. The protein is Formate--tetrahydrofolate ligase of Leuconostoc citreum (strain KM20).